Reading from the N-terminus, the 416-residue chain is UBX domain-containing protein 4 (416 aa).

In terms of domain architecture, UBX spans 273–350; that stretch reads KAISECLLRV…EFGSKTMLLF (78 aa). The tract at residues 376–402 is disordered; it reads TRTTPSVNTINKSNPQGPSDNATSIKK. Over residues 378-402 the composition is skewed to polar residues; the sequence is TTPSVNTINKSNPQGPSDNATSIKK.

It is found in the nucleus. The protein localises to the cytoplasm. In terms of biological role, involved in CDC48-dependent protein degradation through the ubiquitin/proteasome pathway. The polypeptide is UBX domain-containing protein 4 (UBX4) (Saccharomyces cerevisiae (strain ATCC 204508 / S288c) (Baker's yeast)).